Consider the following 377-residue polypeptide: Molybdenum import ATP-binding protein ModC (377 aa).

Residues 17–254 (ITGDEAIRAR…LDLPFAHDED (238 aa)) enclose the ABC transporter domain. 52–59 (GHSGSGKT) provides a ligand contact to ATP. Positions 313-377 (DSSILNVLPA…AQVKGVALLR (65 aa)) constitute a Mop domain.

Belongs to the ABC transporter superfamily. Molybdate importer (TC 3.A.1.8) family. As to quaternary structure, the complex is composed of two ATP-binding proteins (ModC), two transmembrane proteins (ModB) and a solute-binding protein (ModA).

The protein resides in the cell inner membrane. The catalysed reaction is molybdate(out) + ATP + H2O = molybdate(in) + ADP + phosphate + H(+). Part of the ABC transporter complex ModABC involved in molybdenum import. Responsible for energy coupling to the transport system. The protein is Molybdenum import ATP-binding protein ModC of Aromatoleum aromaticum (strain DSM 19018 / LMG 30748 / EbN1) (Azoarcus sp. (strain EbN1)).